The chain runs to 384 residues: Cobalt-precorrin-5B C(1)-methyltransferase (384 aa).

The protein belongs to the CbiD family.

It carries out the reaction Co-precorrin-5B + S-adenosyl-L-methionine = Co-precorrin-6A + S-adenosyl-L-homocysteine. It participates in cofactor biosynthesis; adenosylcobalamin biosynthesis; cob(II)yrinate a,c-diamide from sirohydrochlorin (anaerobic route): step 6/10. In terms of biological role, catalyzes the methylation of C-1 in cobalt-precorrin-5B to form cobalt-precorrin-6A. The chain is Cobalt-precorrin-5B C(1)-methyltransferase from Marinomonas sp. (strain MWYL1).